We begin with the raw amino-acid sequence, 1581 residues long: Laminin subunit gamma-3 (1581 aa).

Positions 1–28 (MAVSRVLSLLATVASMALVIQETHFAAG) are cleaved as a signal peptide. Residues 40 to 279 (RAQRCLPEFE…AVSDFSVGGR (240 aa)) enclose the Laminin N-terminal domain. The N-linked (GlcNAc...) asparagine glycan is linked to N128. 16 cysteine pairs are disulfide-bonded: C280-C289, C282-C299, C301-C310, C313-C333, C336-C345, C338-C361, C364-C373, C376-C389, C392-C404, C394-C410, C412-C421, C424-C436, C439-C450, C441-C457, C459-C468, and C471-C486. Laminin EGF-like domains lie at 280–335 (CKCN…ECLP), 336–391 (CNCS…PCQP), 392–438 (CDCH…GCRP), and 439–488 (CACN…GCSS). Residue N304 is glycosylated (N-linked (GlcNAc...) asparagine). The N-linked (GlcNAc...) asparagine glycan is linked to N337. One can recognise a Laminin EGF-like 5; first part domain in the interval 489-498 (CFCYGHSKVC). One can recognise a Laminin IV type A domain in the interval 508–684 (HIRSDFRHGA…LAPPASWVET (177 aa)). The N-linked (GlcNAc...) asparagine glycan is linked to N640. Positions 685 to 718 (CLCPQGYTGQFCEFCALGYKREIPHGGPYANCIP) constitute a Laminin EGF-like 5; second part domain. 24 disulfide bridges follow: C719/C727, C721/C734, C736/C745, C748/C764, C767/C775, C769/C786, C789/C798, C801/C819, C822/C836, C824/C843, C846/C855, C858/C875, C878/C891, C880/C898, C900/C909, C912/C925, C928/C940, C930/C947, C949/C958, C961/C973, C976/C988, C978/C994, C996/C1005, and C1008/C1021. 6 consecutive Laminin EGF-like domains span residues 719–766 (CTCN…DCQP), 767–821 (CPCP…PCRR), 822–877 (CQCS…KCAP), 878–927 (CSCD…GCQS), 928–975 (CKCH…GCRD), and 976–1024 (CRCS…CQEC). N-linked (GlcNAc...) asparagine glycosylation occurs at N849. N991 carries an N-linked (GlcNAc...) asparagine glycan. The segment at 1025-1581 (PTCYALVKEE…LSSLPENCAS (557 aa)) is domain II and I. Coiled-coil stretches lie at residues 1029–1046 (ALVK…MLME) and 1112–1153 (VHCA…LASL). N1162 and N1196 each carry an N-linked (GlcNAc...) asparagine glycan. A coiled-coil region spans residues 1208–1231 (RVASEAQQELEDRYQEVQAAQTAL). An N-linked (GlcNAc...) asparagine glycan is attached at N1320. The segment at 1382–1413 (KRKTKQAERMLGNAASLSSSTKKKSKEAELMS) is disordered. Coiled-coil stretches lie at residues 1438-1468 (ASQT…AKQV) and 1510-1575 (AQTL…LSSL). N1514 is a glycosylation site (N-linked (GlcNAc...) asparagine).

Laminin is a complex glycoprotein, consisting of three different polypeptide chains (alpha, beta, gamma), which are bound to each other by disulfide bonds into a cross-shaped molecule comprising one long and three short arms with globules at each end. Gamma-3 is a subunit of laminin-12 (laminin-213), laminin-14 (laminin-423) and laminin-15 (laminin-523). In terms of tissue distribution, strongly expressed in capillaries and arterioles of kidney as well as in interstitial Leydig cells of testis.

It is found in the secreted. The protein resides in the extracellular space. It localises to the extracellular matrix. The protein localises to the basement membrane. Its function is as follows. Binding to cells via a high affinity receptor, laminin is thought to mediate the attachment, migration and organization of cells into tissues during embryonic development by interacting with other extracellular matrix components. This is Laminin subunit gamma-3 (Lamc3) from Mus musculus (Mouse).